Here is a 122-residue protein sequence, read N- to C-terminus: Large ribosomal subunit protein uL14 (122 aa).

This sequence belongs to the universal ribosomal protein uL14 family. Part of the 50S ribosomal subunit. Forms a cluster with proteins L3 and L19. In the 70S ribosome, L14 and L19 interact and together make contacts with the 16S rRNA in bridges B5 and B8.

In terms of biological role, binds to 23S rRNA. Forms part of two intersubunit bridges in the 70S ribosome. The polypeptide is Large ribosomal subunit protein uL14 (Staphylococcus haemolyticus (strain JCSC1435)).